We begin with the raw amino-acid sequence, 289 residues long: Glycine--tRNA ligase alpha subunit (289 aa).

This sequence belongs to the class-II aminoacyl-tRNA synthetase family. As to quaternary structure, tetramer of two alpha and two beta subunits.

It localises to the cytoplasm. It carries out the reaction tRNA(Gly) + glycine + ATP = glycyl-tRNA(Gly) + AMP + diphosphate. In Rickettsia bellii (strain OSU 85-389), this protein is Glycine--tRNA ligase alpha subunit.